Reading from the N-terminus, the 134-residue chain is MLKKTSLIFTALLMTGCVQNANVTTPQAQKMQVEKVDKALQKGEADRYLCQDDRVVRVVHATHKKYKKNLHYVTVTFQGVSEKLTLMISERGKNYANIRWMWQERDDFSTLKTNLGEILATQCVSQTSERLSGQ.

This is Opacity-associated protein OapB (oapB) from Haemophilus influenzae (strain ATCC 51907 / DSM 11121 / KW20 / Rd).